The sequence spans 990 residues: Pro-apoptotic serine protease NMA111 (990 aa).

The disordered stretch occupies residues 1-32 (MSVTNSNRKRSLSEVSEGSDPEAPAKTRNSYT). The interval 73-263 (VVSIHFSQVA…LPLDRILRAL (191 aa)) is serine protease. Residues His111, Asp142, and Ser225 each act as charge relay system in the active site. PDZ domains follow at residues 290 to 368 (RRLG…QRGG) and 758 to 843 (SILT…VREG).

Belongs to the peptidase S1C family.

The protein localises to the nucleus. Its function is as follows. Nuclear serine protease which mediates apoptosis. The polypeptide is Pro-apoptotic serine protease NMA111 (NMA111) (Vanderwaltozyma polyspora (strain ATCC 22028 / DSM 70294 / BCRC 21397 / CBS 2163 / NBRC 10782 / NRRL Y-8283 / UCD 57-17) (Kluyveromyces polysporus)).